The following is a 249-amino-acid chain: Isoprenyl transferase (249 aa).

Asp25 is a catalytic residue. Residue Asp25 coordinates Mg(2+). Residues 26 to 29 (GNGR), Trp30, Arg38, His42, and 70 to 72 (STE) each bind substrate. Residue Asn73 is the Proton acceptor of the active site. Substrate is bound by residues Trp74, Arg76, Arg197, and 203 to 205 (RLS). Glu216 contacts Mg(2+).

Belongs to the UPP synthase family. As to quaternary structure, homodimer. It depends on Mg(2+) as a cofactor.

Its function is as follows. Catalyzes the condensation of isopentenyl diphosphate (IPP) with allylic pyrophosphates generating different type of terpenoids. The polypeptide is Isoprenyl transferase (Streptococcus pyogenes serotype M6 (strain ATCC BAA-946 / MGAS10394)).